Reading from the N-terminus, the 387-residue chain is Phosphoglycerate kinase (387 aa).

Substrate is bound by residues Asp21 to Asn23, Arg36, His59 to Arg62, Arg113, and Arg146. Residues Lys197, Glu314, and Gly340–Thr343 contribute to the ATP site.

It belongs to the phosphoglycerate kinase family. Monomer.

The protein localises to the cytoplasm. It carries out the reaction (2R)-3-phosphoglycerate + ATP = (2R)-3-phospho-glyceroyl phosphate + ADP. The protein operates within carbohydrate degradation; glycolysis; pyruvate from D-glyceraldehyde 3-phosphate: step 2/5. This is Phosphoglycerate kinase from Marinomonas sp. (strain MWYL1).